We begin with the raw amino-acid sequence, 274 residues long: MEVFMYQINALNPKEEGHKARKRFGQNFLHDQRVIAKIVRSVNPRPGDNVVEIGPGLAALTSPLIGECDALTVVELDRDLAAGLPDRVPHPERLTIVEADALKYDFSQLATQESPLRVVGNLPYNISTPLLFHLLEFGDKVKDMHFMLQKEVVDRITAEPNTKEYGRLSVMIQYFCQPTFLFEVPAGAFNPPPKVTSAVFRLVPYKEKPIVAKDEKALSRLVGHVFTQRRKTLRNSLKGMLADDAFDKAGIDPMARPETLTLAQFVALSDQMVP.

Asn27, Leu29, Gly54, Glu75, Asp100, and Asn121 together coordinate S-adenosyl-L-methionine.

Belongs to the class I-like SAM-binding methyltransferase superfamily. rRNA adenine N(6)-methyltransferase family. RsmA subfamily.

It localises to the cytoplasm. It carries out the reaction adenosine(1518)/adenosine(1519) in 16S rRNA + 4 S-adenosyl-L-methionine = N(6)-dimethyladenosine(1518)/N(6)-dimethyladenosine(1519) in 16S rRNA + 4 S-adenosyl-L-homocysteine + 4 H(+). Functionally, specifically dimethylates two adjacent adenosines (A1518 and A1519) in the loop of a conserved hairpin near the 3'-end of 16S rRNA in the 30S particle. May play a critical role in biogenesis of 30S subunits. This is Ribosomal RNA small subunit methyltransferase A from Acinetobacter baylyi (strain ATCC 33305 / BD413 / ADP1).